A 543-amino-acid polypeptide reads, in one-letter code: CTP synthase (543 aa).

An amidoligase domain region spans residues 1–265 (MTNYIFVTGG…DELVVQRFGL (265 aa)). A CTP-binding site is contributed by Ser-13. Ser-13 contributes to the UTP binding site. Residues 14-19 (SLGKGI) and Asp-71 each bind ATP. Residues Asp-71 and Glu-139 each coordinate Mg(2+). Residues 146-148 (DIE), 186-191 (KTKPTQ), and Lys-222 contribute to the CTP site. UTP is bound by residues 186–191 (KTKPTQ) and Lys-222. 238–240 (KDA) serves as a coordination point for ATP. The Glutamine amidotransferase type-1 domain occupies 290-541 (TIGMVGKYVE…VKAAGEYYKN (252 aa)). Gly-351 contacts L-glutamine. Cys-378 serves as the catalytic Nucleophile; for glutamine hydrolysis. Residues 379-382 (LGMQ), Glu-402, and Arg-469 each bind L-glutamine. Residues His-514 and Glu-516 contribute to the active site.

This sequence belongs to the CTP synthase family. Homotetramer.

It carries out the reaction UTP + L-glutamine + ATP + H2O = CTP + L-glutamate + ADP + phosphate + 2 H(+). The enzyme catalyses L-glutamine + H2O = L-glutamate + NH4(+). The catalysed reaction is UTP + NH4(+) + ATP = CTP + ADP + phosphate + 2 H(+). It functions in the pathway pyrimidine metabolism; CTP biosynthesis via de novo pathway; CTP from UDP: step 2/2. Its activity is regulated as follows. Allosterically activated by GTP, when glutamine is the substrate; GTP has no effect on the reaction when ammonia is the substrate. The allosteric effector GTP functions by stabilizing the protein conformation that binds the tetrahedral intermediate(s) formed during glutamine hydrolysis. Inhibited by the product CTP, via allosteric rather than competitive inhibition. Catalyzes the ATP-dependent amination of UTP to CTP with either L-glutamine or ammonia as the source of nitrogen. Regulates intracellular CTP levels through interactions with the four ribonucleotide triphosphates. The sequence is that of CTP synthase from Pseudoalteromonas atlantica (strain T6c / ATCC BAA-1087).